We begin with the raw amino-acid sequence, 183 residues long: Large ribosomal subunit protein uL5 (183 aa).

This sequence belongs to the universal ribosomal protein uL5 family. Part of the 50S ribosomal subunit; part of the 5S rRNA/L5/L18/L25 subcomplex. Contacts the 5S rRNA and the P site tRNA. Forms a bridge to the 30S subunit in the 70S ribosome.

Functionally, this is one of the proteins that bind and probably mediate the attachment of the 5S RNA into the large ribosomal subunit, where it forms part of the central protuberance. In the 70S ribosome it contacts protein S13 of the 30S subunit (bridge B1b), connecting the 2 subunits; this bridge is implicated in subunit movement. Contacts the P site tRNA; the 5S rRNA and some of its associated proteins might help stabilize positioning of ribosome-bound tRNAs. The sequence is that of Large ribosomal subunit protein uL5 from Tropheryma whipplei (strain TW08/27) (Whipple's bacillus).